Here is a 425-residue protein sequence, read N- to C-terminus: Enolase (425 aa).

Residue Q163 coordinates (2R)-2-phosphoglycerate. Catalysis depends on E205, which acts as the Proton donor. 3 residues coordinate Mg(2+): D242, E285, and D312. Residues K337, R366, S367, and K388 each coordinate (2R)-2-phosphoglycerate. The Proton acceptor role is filled by K337.

Belongs to the enolase family. It depends on Mg(2+) as a cofactor.

The protein localises to the cytoplasm. Its subcellular location is the secreted. It is found in the cell surface. The catalysed reaction is (2R)-2-phosphoglycerate = phosphoenolpyruvate + H2O. It participates in carbohydrate degradation; glycolysis; pyruvate from D-glyceraldehyde 3-phosphate: step 4/5. In terms of biological role, catalyzes the reversible conversion of 2-phosphoglycerate (2-PG) into phosphoenolpyruvate (PEP). It is essential for the degradation of carbohydrates via glycolysis. The protein is Enolase of Ruegeria pomeroyi (strain ATCC 700808 / DSM 15171 / DSS-3) (Silicibacter pomeroyi).